The following is a 131-amino-acid chain: Small ribosomal subunit protein uS8 (131 aa).

The protein belongs to the universal ribosomal protein uS8 family. Part of the 30S ribosomal subunit. Contacts proteins S5 and S12.

One of the primary rRNA binding proteins, it binds directly to 16S rRNA central domain where it helps coordinate assembly of the platform of the 30S subunit. The protein is Small ribosomal subunit protein uS8 of Cupriavidus necator (strain ATCC 17699 / DSM 428 / KCTC 22496 / NCIMB 10442 / H16 / Stanier 337) (Ralstonia eutropha).